The primary structure comprises 378 residues: MELQEVLHMNEGEGDTSYAKNASYNLALAKVKPFLEQCIRELLRANLPNINKCIKVADLGCASGPNTLLTVRDIVQSIDKVGQEEKNELERPTIQIFLNDLFQNDFNSVFKLLPSFYRKLEKENGRKIGSCLISAMPGSFYGRLFPEESMHFLHSCYSVHWLSQVPSGLVIELGIGANKGSIYSSKGCRPPVQKAYLDQFTKDFTTFLRIHSKELFSRGRMLLTCICKVDEFDEPNPLDLLDMAINDLIVEGLLEEEKLDSFNIPFFTPSAEEVKCIVEEEGSCEILYLETFKAHYDAAFSIDDDYPVTSHEQIKAEYVASLIRSVYEPILASHFGEAIMPDLFHRLAKHAAKVLHMGKGCYNNLIISLAKKPEKSDV.

Residues Tyr-18, Cys-61, Asn-66, Asp-100, Leu-101, Ser-139, Phe-140, and Cys-156 each coordinate S-adenosyl-L-homocysteine. The theobromine site is built by Tyr-157, His-160, and Trp-161. Residues Asn-178, Asp-260, Phe-262, and Asn-263 each coordinate Mg(2+). Theobromine is bound at residue Tyr-362.

Belongs to the methyltransferase superfamily. Type-7 methyltransferase family. Mg(2+) is required as a cofactor. In terms of tissue distribution, mainly expressed, at low levels, in leaves and fruits (grains). Also present, at lower levels, in roots, stamens and pistils.

It is found in the cytoplasm. It carries out the reaction 7-methylxanthine + S-adenosyl-L-methionine = theobromine + S-adenosyl-L-homocysteine + H(+). The protein operates within alkaloid biosynthesis. Its function is as follows. Involved in the biosynthesis of caffeine. Catalyzes the conversion of 7-methylxanthine (7mX) to theobromine and of paraxanthine to caffeine. In Coffea canephora (Robusta coffee), this protein is 7-methylxanthine methyltransferase 1.